A 127-amino-acid polypeptide reads, in one-letter code: Fluoride-specific ion channel FluC (127 aa).

4 helical membrane passes run 4–24 (IIYI…TQIA), 34–54 (FPFP…IGFF), 65–85 (FELR…FSTL), and 97–117 (FYGI…LAVL). Glycine 77 and threonine 80 together coordinate Na(+).

It belongs to the fluoride channel Fluc/FEX (TC 1.A.43) family.

It localises to the cell inner membrane. The catalysed reaction is fluoride(in) = fluoride(out). Na(+) is not transported, but it plays an essential structural role and its presence is essential for fluoride channel function. In terms of biological role, fluoride-specific ion channel. Important for reducing fluoride concentration in the cell, thus reducing its toxicity. The polypeptide is Fluoride-specific ion channel FluC (Bacteroides fragilis (strain ATCC 25285 / DSM 2151 / CCUG 4856 / JCM 11019 / LMG 10263 / NCTC 9343 / Onslow / VPI 2553 / EN-2)).